The primary structure comprises 564 residues: Dihydroxy-acid dehydratase (564 aa).

D80 is a Mg(2+) binding site. C121 is a [2Fe-2S] cluster binding site. Mg(2+) is bound by residues D122 and K123. K123 bears the N6-carboxylysine mark. C194 provides a ligand contact to [2Fe-2S] cluster. E447 provides a ligand contact to Mg(2+). S473 serves as the catalytic Proton acceptor.

Belongs to the IlvD/Edd family. As to quaternary structure, homodimer. [2Fe-2S] cluster serves as cofactor. Requires Mg(2+) as cofactor.

It catalyses the reaction (2R)-2,3-dihydroxy-3-methylbutanoate = 3-methyl-2-oxobutanoate + H2O. It carries out the reaction (2R,3R)-2,3-dihydroxy-3-methylpentanoate = (S)-3-methyl-2-oxopentanoate + H2O. The protein operates within amino-acid biosynthesis; L-isoleucine biosynthesis; L-isoleucine from 2-oxobutanoate: step 3/4. Its pathway is amino-acid biosynthesis; L-valine biosynthesis; L-valine from pyruvate: step 3/4. Its function is as follows. Functions in the biosynthesis of branched-chain amino acids. Catalyzes the dehydration of (2R,3R)-2,3-dihydroxy-3-methylpentanoate (2,3-dihydroxy-3-methylvalerate) into 2-oxo-3-methylpentanoate (2-oxo-3-methylvalerate) and of (2R)-2,3-dihydroxy-3-methylbutanoate (2,3-dihydroxyisovalerate) into 2-oxo-3-methylbutanoate (2-oxoisovalerate), the penultimate precursor to L-isoleucine and L-valine, respectively. This Listeria monocytogenes serotype 4b (strain CLIP80459) protein is Dihydroxy-acid dehydratase.